Reading from the N-terminus, the 131-residue chain is Glycine cleavage system H protein (131 aa).

The Lipoyl-binding domain occupies 24-106; that stretch reads RVTVGISDHA…YGDGWMYVVE (83 aa). K65 is subject to N6-lipoyllysine.

Belongs to the GcvH family. In terms of assembly, the glycine cleavage system is composed of four proteins: P, T, L and H. The cofactor is (R)-lipoate.

In terms of biological role, the glycine cleavage system catalyzes the degradation of glycine. The H protein shuttles the methylamine group of glycine from the P protein to the T protein. The chain is Glycine cleavage system H protein from Stenotrophomonas maltophilia (strain R551-3).